We begin with the raw amino-acid sequence, 332 residues long: L-lactate dehydrogenase A chain (332 aa).

A2 bears the N-acetylalanine mark. An N6-acetyllysine; alternate modification is found at K5. At K5 the chain carries N6-succinyllysine; alternate. N6-acetyllysine is present on K14. 29 to 57 (GAVGMACAISILMKDLADELALVDVMEDK) serves as a coordination point for NAD(+). At K57 the chain carries N6-acetyllysine; alternate. Residue K57 forms a Glycyl lysine isopeptide (Lys-Gly) (interchain with G-Cter in SUMO2); alternate linkage. K81 is subject to N6-acetyllysine. R99 is a binding site for NAD(+). R106 contacts substrate. K118 is modified (N6-acetyllysine; alternate). K118 bears the N6-succinyllysine; alternate mark. Residue K126 is modified to N6-acetyllysine. Position 138 (N138) interacts with NAD(+). 2 residues coordinate substrate: N138 and R169. Residue H193 is the Proton acceptor of the active site. 2 positions are modified to N6-acetyllysine: K224 and K232. Y239 carries the phosphotyrosine modification. N6-acetyllysine is present on K243. Residue T248 coordinates substrate. Residue T309 is modified to Phosphothreonine. S310 bears the Phosphoserine mark. K318 carries the post-translational modification N6-acetyllysine; alternate. N6-succinyllysine; alternate is present on K318. T322 bears the Phosphothreonine mark.

The protein belongs to the LDH/MDH superfamily. LDH family. In terms of assembly, homotetramer. Interacts with PTEN upstream reading frame protein MP31. In terms of processing, ISGylated.

It localises to the cytoplasm. It carries out the reaction (S)-lactate + NAD(+) = pyruvate + NADH + H(+). The protein operates within fermentation; pyruvate fermentation to lactate; (S)-lactate from pyruvate: step 1/1. Functionally, interconverts simultaneously and stereospecifically pyruvate and lactate with concomitant interconversion of NADH and NAD(+). This Oryctolagus cuniculus (Rabbit) protein is L-lactate dehydrogenase A chain (LDHA).